A 432-amino-acid polypeptide reads, in one-letter code: Adenylosuccinate synthetase (432 aa).

GTP contacts are provided by residues 13-19 and 41-43; these read GDEGKGK and GHT. Asp14 functions as the Proton acceptor in the catalytic mechanism. Residues Asp14 and Gly41 each coordinate Mg(2+). Residues 14 to 17, 39 to 42, Thr130, Arg144, Gln225, Thr240, and Arg304 each bind IMP; these read DEGK and NAGH. His42 acts as the Proton donor in catalysis. A substrate-binding site is contributed by 300-306; sequence ATTGRRR. GTP contacts are provided by residues Arg306, 332 to 334, and 415 to 417; these read KLD and STG.

It belongs to the adenylosuccinate synthetase family. As to quaternary structure, homodimer. Mg(2+) is required as a cofactor.

Its subcellular location is the cytoplasm. The enzyme catalyses IMP + L-aspartate + GTP = N(6)-(1,2-dicarboxyethyl)-AMP + GDP + phosphate + 2 H(+). The protein operates within purine metabolism; AMP biosynthesis via de novo pathway; AMP from IMP: step 1/2. In terms of biological role, plays an important role in the de novo pathway of purine nucleotide biosynthesis. Catalyzes the first committed step in the biosynthesis of AMP from IMP. This Escherichia coli (strain K12) protein is Adenylosuccinate synthetase.